The sequence spans 67 residues: Potassium channel toxin alpha-KTx 6.16 (67 aa).

A signal peptide spans 1–24 (MNLKLALVLLLTVINVGMLPGATS). 4 cysteine pairs are disulfide-bonded: cysteine 34/cysteine 55, cysteine 40/cysteine 60, cysteine 44/cysteine 62, and cysteine 50/cysteine 65.

It belongs to the short scorpion toxin superfamily. Potassium channel inhibitor family. Alpha-KTx 06 subfamily. As to expression, expressed by the venom gland.

The protein resides in the secreted. Its function is as follows. Inhibits voltage-gated potassium channels. This Opisthacanthus cayaporum (South American scorpion) protein is Potassium channel toxin alpha-KTx 6.16.